The primary structure comprises 57 residues: Gene 19.3 protein (57 aa).

This Escherichia coli (Bacteriophage T3) protein is Gene 19.3 protein (19.3).